Consider the following 268-residue polypeptide: Undecaprenyl-diphosphatase (268 aa).

Helical transmembrane passes span 41-61, 81-101, 106-126, 146-166, 191-211, 213-233, and 245-265; these read LAYSLGLFLEAASVLAALIYF, WLTYVIVTTAATGAVGIPLYM, YLLLGASAGWLMVVLGVAVIF, MTLGHMALVGLAQALSVLPGI, FVLVPIAGLGATALAYLSEGG, VATPEVITAMLIGLVVSLVTI, and VTLVNIVVGTLAIAGGITRIL.

This sequence belongs to the UppP family.

It is found in the cell membrane. The catalysed reaction is di-trans,octa-cis-undecaprenyl diphosphate + H2O = di-trans,octa-cis-undecaprenyl phosphate + phosphate + H(+). Catalyzes the dephosphorylation of undecaprenyl diphosphate (UPP). In Pyrobaculum islandicum (strain DSM 4184 / JCM 9189 / GEO3), this protein is Undecaprenyl-diphosphatase.